Consider the following 190-residue polypeptide: uncharacterized protein (190 aa).

Residues 1–21 (MLVMSITFSFVAVALLVYFYV) form a helical membrane-spanning segment. Residues 103-114 (REEVCARPEHRS) show a composition bias toward basic and acidic residues. Residues 103 to 130 (REEVCARPEHRSAPSRAGSSAAKPTPTK) form a disordered region.

It to B.burgdorferi BB0265.

It localises to the membrane. This is an uncharacterized protein from Treponema pallidum (strain Nichols).